Here is a 280-residue protein sequence, read N- to C-terminus: Chaperone protein DnaJ 2 (280 aa).

The J domain occupies 6 to 70 (DYYAILGVPR…EKRRIYDTYG (65 aa)).

The protein belongs to the DnaJ family. As to quaternary structure, forms a heterononamer with DnaJ and DafA in the resting state. Three copies of each protein are present in the complex.

Its subcellular location is the cytoplasm. In terms of biological role, does not influence ATP binding or hydrolysis nor ADP release. Exerts influence on the interaction of DnaK with substrates; in the presence of DafA, DnaJ inhibits substrate binding, and substrate already bound to DnaK is displaced by DnaJ and DafA. The protein is Chaperone protein DnaJ 2 (dnaJ2) of Thermus thermophilus (strain ATCC 27634 / DSM 579 / HB8).